Consider the following 916-residue polypeptide: Neurofilament medium polypeptide (916 aa).

The span at 1 to 10 shows a compositional bias: polar residues; sequence MSYTLDSLGN. Positions 1 to 51 are disordered; that stretch reads MSYTLDSLGNPSAYRRVTETRSSFSRVSGSPSSGFRSQSWSRGSPSTVSSS. N-acetylserine is present on serine 2. The head stretch occupies residues 2–104; that stretch reads SYTLDSLGNP…KLSRSNEKEQ (103 aa). Over residues 21–44 the composition is skewed to low complexity; that stretch reads RSSFSRVSGSPSSGFRSQSWSRGS. Phosphoserine is present on serine 30. Arginine 42 carries the post-translational modification Omega-N-methylarginine. An O-linked (GlcNAc) threonine glycan is attached at threonine 47. Position 99 is a phosphoserine (serine 99). In terms of domain architecture, IF rod spans 101 to 412; it reads EKEQLQGLND…KLLEGEETRF (312 aa). Positions 105 to 136 are coil 1A; that stretch reads LQGLNDRFAGYIEKVHYLEQQNKEIEAEIQAL. The linker 1 stretch occupies residues 137 to 149; sequence RQKQASHAQLGDA. Positions 150-248 are coil 1B; that stretch reads YDQEIRELRA…EEEVADLLAQ (99 aa). Serine 226 carries the post-translational modification Phosphoserine. A linker 12 region spans residues 249-265; that stretch reads IQASHITVERKDYLKTD. Positions 266–287 are coil 2A; that stretch reads ISTALKEIRSQLESHSDQNMHQ. A linker 2 region spans residues 288–291; it reads AEEW. The tract at residues 292–412 is coil 2B; it reads FKCRYAKLTE…KLLEGEETRF (121 aa). Residue tyrosine 320 is modified to Phosphotyrosine. Phosphoserine is present on residues serine 346 and serine 418. The segment at 413 to 916 is tail; sequence STFAGSITGP…AIVKEVTQSD (504 aa). Threonine 431 is a glycosylation site (O-linked (GlcNAc) threonine). A phosphoserine mark is found at serine 467 and serine 483. The disordered stretch occupies residues 485–851; sequence KEEKKEAAEE…KKGGDKSEEK (367 aa). Residues 493-505 show a composition bias toward acidic residues; it reads EEKEEEPEAEEEE. Phosphoserine is present on serine 511. The span at 521 to 541 shows a compositional bias: acidic residues; that stretch reads KEEEGEKEEEEGQEEEEEEDE. Residues 542-561 are compositionally biased toward basic and acidic residues; it reads GAKSDQAEEGGSEKEGSSEK. Serine 545, serine 553, serine 558, and serine 559 each carry phosphoserine. Over residues 562–582 the composition is skewed to acidic residues; it reads EEGEQEEGETEAEAEGEEAEA. Threonine 571 carries the post-translational modification Phosphothreonine. Residues 583 to 614 are compositionally biased toward basic and acidic residues; it reads KEEKKVEEKSEEVATKEELVADAKVEKPEKAK. 6 tandem repeats follow at residues 614–626, 627–639, 640–652, 653–665, 666–678, and 679–691. The segment at 614–691 is 6 X 13 AA approximate tandem repeats of K-S-P-V-[PS]-K-S-P-V-E-E-[KA]-[GAK]; it reads KSPVPKSPVE…VPKSPVEEAK (78 aa). Serine 641 and serine 646 each carry phosphoserine. A phosphoserine mark is found at serine 680 and serine 685. 3 stretches are compositionally biased toward basic and acidic residues: residues 686–701, 707–742, and 755–778; these read PVEE…KGEQ, KEVK…KEEA, and VHLE…EKAG. Serine 736 bears the Phosphoserine mark. Phosphoserine is present on residues serine 783, serine 821, and serine 837. The segment covering 788 to 828 has biased composition (basic and acidic residues); sequence SDKGAKGSRKEDIAVNGEVEGKEEVEQETKEKGSGREEEKG. Residues 839-851 are compositionally biased toward basic and acidic residues; the sequence is ADEKKGGDKSEEK.

This sequence belongs to the intermediate filament family. In terms of assembly, forms heterodimers with NEFL; which can further hetero-oligomerize (in vitro). Forms heterodimers with INA (in vitro). In terms of processing, there are a number of repeats of the tripeptide K-S-P, NFM is phosphorylated on a number of the serines in this motif. It is thought that phosphorylation of NFM results in the formation of interfilament cross bridges that are important in the maintenance of axonal caliber. Phosphorylation seems to play a major role in the functioning of the larger neurofilament polypeptides (NF-M and NF-H), the levels of phosphorylation being altered developmentally and coincidentally with a change in the neurofilament function. Post-translationally, phosphorylated in the head and rod regions by the PKC kinase PKN1, leading to the inhibition of polymerization.

Its subcellular location is the cytoplasm. It is found in the cytoskeleton. The protein localises to the cell projection. The protein resides in the axon. In terms of biological role, neurofilaments usually contain three intermediate filament proteins: NEFL, NEFM, and NEFH which are involved in the maintenance of neuronal caliber. May additionally cooperate with the neuronal intermediate filament proteins PRPH and INA to form neuronal filamentous networks. The sequence is that of Neurofilament medium polypeptide (NEFM) from Homo sapiens (Human).